A 103-amino-acid polypeptide reads, in one-letter code: uncharacterized protein (103 aa).

A helical membrane pass occupies residues 35–57 (PFVSMFQTFLEVLTATVLAFTAY).

The protein localises to the host membrane. This is an uncharacterized protein from Acidianus bottle-shaped virus (isolate Italy/Pozzuoli) (ABV).